A 424-amino-acid polypeptide reads, in one-letter code: Histidine--tRNA ligase (424 aa).

The protein belongs to the class-II aminoacyl-tRNA synthetase family. As to quaternary structure, homodimer.

It localises to the cytoplasm. The catalysed reaction is tRNA(His) + L-histidine + ATP = L-histidyl-tRNA(His) + AMP + diphosphate + H(+). This is Histidine--tRNA ligase from Salmonella paratyphi A (strain ATCC 9150 / SARB42).